A 156-amino-acid polypeptide reads, in one-letter code: Cellulose synthase operon protein D (156 aa).

Its pathway is glycan metabolism; bacterial cellulose biosynthesis. Functionally, may have a major role in the perfection of crystallization, involved either in the pore structure itself or in the organization of the pores within the linear array of terminal synthesizing complexes (TCs). The sequence is that of Cellulose synthase operon protein D from Komagataeibacter xylinus (Gluconacetobacter xylinus).